Consider the following 179-residue polypeptide: Large ribosomal subunit protein uL5 (179 aa).

It belongs to the universal ribosomal protein uL5 family. In terms of assembly, part of the 50S ribosomal subunit; part of the 5S rRNA/L5/L18/L25 subcomplex. Contacts the 5S rRNA and the P site tRNA. Forms a bridge to the 30S subunit in the 70S ribosome.

In terms of biological role, this is one of the proteins that bind and probably mediate the attachment of the 5S RNA into the large ribosomal subunit, where it forms part of the central protuberance. In the 70S ribosome it contacts protein S13 of the 30S subunit (bridge B1b), connecting the 2 subunits; this bridge is implicated in subunit movement. Contacts the P site tRNA; the 5S rRNA and some of its associated proteins might help stabilize positioning of ribosome-bound tRNAs. This chain is Large ribosomal subunit protein uL5, found in Salmonella agona (strain SL483).